Consider the following 549-residue polypeptide: Probable protein kinase UbiB (549 aa).

Positions 123–501 constitute a Protein kinase domain; sequence DFNETPLASA…QQQAHKSNYL (379 aa). Residues 129–137 and lysine 152 contribute to the ATP site; that span reads LASASISQV. The active-site Proton acceptor is the aspartate 287. The next 2 membrane-spanning stretches (helical) occupy residues 498–518 and 520–540; these read SNYL…LFNQ and ATLL…IIGW.

It belongs to the ABC1 family. UbiB subfamily.

It is found in the cell inner membrane. Its pathway is cofactor biosynthesis; ubiquinone biosynthesis [regulation]. In terms of biological role, is probably a protein kinase regulator of UbiI activity which is involved in aerobic coenzyme Q (ubiquinone) biosynthesis. The protein is Probable protein kinase UbiB of Shewanella oneidensis (strain ATCC 700550 / JCM 31522 / CIP 106686 / LMG 19005 / NCIMB 14063 / MR-1).